The primary structure comprises 156 residues: Small ribosomal subunit protein uS7 (156 aa).

The protein belongs to the universal ribosomal protein uS7 family. Part of the 30S ribosomal subunit. Contacts proteins S9 and S11.

Functionally, one of the primary rRNA binding proteins, it binds directly to 16S rRNA where it nucleates assembly of the head domain of the 30S subunit. Is located at the subunit interface close to the decoding center, probably blocks exit of the E-site tRNA. The protein is Small ribosomal subunit protein uS7 of Brachyspira hyodysenteriae (strain ATCC 49526 / WA1).